Consider the following 235-residue polypeptide: MASSQPPLPPPPPPLLLLALLLLLKVSDTSSSVSTATSTASETDNLTSKPLTSSFSSSSPTVWEKQTSQEKPETASTSHPDSSSSESTISHSPSNSGTTSTTQPTSSQPEPDTHPSSGSPSSEHTVTSPSLGSVSLATLPWSPTHPKPSTGPPSVSLATTDRTFETSGYAPGDSGVPRLHRNPGVVVAVCLLVSALLIGGAIMAVRRCHNGVSEFQKLDEGLVSRRSSSAHHTLP.

The first 31 residues, methionine 1–serine 31, serve as a signal peptide directing secretion. Composition is skewed to low complexity over residues aspartate 28 to threonine 61 and serine 76 to glutamate 110. Positions aspartate 28–threonine 159 are disordered. Residues serine 32–glycine 184 lie on the Extracellular side of the membrane. A glycan (N-linked (GlcNAc...) asparagine) is linked at asparagine 45. Positions histidine 114–leucine 136 are enriched in polar residues. A helical membrane pass occupies residues valine 185 to valine 205. The Cytoplasmic segment spans residues arginine 206–proline 235.

As to expression, highly expressed in large intestine, small intestine, rumen, and kidney tissues.

The protein resides in the membrane. The chain is Protein CIST1 (CIST1) from Bos taurus (Bovine).